Reading from the N-terminus, the 273-residue chain is Flagellin FljK (273 aa).

Belongs to the bacterial flagellin family. As to quaternary structure, in C.crescentus, the flagellar filament is composed of multiple flagellins of 29 kDa; 27 kDa and 25 kDa.

The protein localises to the secreted. The protein resides in the bacterial flagellum. Functionally, flagellin is the subunit protein which polymerizes to form the filaments of bacterial flagella. This chain is Flagellin FljK (fljK), found in Caulobacter vibrioides (strain ATCC 19089 / CIP 103742 / CB 15) (Caulobacter crescentus).